The primary structure comprises 444 residues: MNDTITAIATPNINSAISIIRISGPNTYEIVSKITKKEITKTGYTFVKEFIYQNDLIIDEVIILKYVAPKSFTGEDLIEINCHGGVLITNKILDLILESGARLAENGEFTKRAFLNNKLTLRQANSINNLIFSKTDIATNLSSNGIINSNNDFFLDIKEKIFYLIGKIEVNIDYPEYEDVEQVTAKEFNLEVKEIIDKLNKTINDFNKVSYLYNGLNVVIVGKPNVGKSSLLNSLIKKNKAIVSDIKGTTRDLVTESINLEGLLLNFIDTAGIRESKNKIENIGIKKTMASIKEADLILFLIDDSKKIDKKEKEILNLIKNKNYIIVKNKSDLKVNANSELKGISISALKKDVKPLVNEIKTNLKQGDFNIANNLAICSDNELKIIKQVLLVLKKSYANSLSGFPLDLLVEDLKVAYEKICTIMGLSEDLNIIDKMFKNFCLGK.

3 residues coordinate (6S)-5-formyl-5,6,7,8-tetrahydrofolate: arginine 21, glutamate 79, and lysine 118. The region spanning 215–365 is the TrmE-type G domain; it reads GLNVVIVGKP…LVNEIKTNLK (151 aa). Asparagine 225 lines the K(+) pocket. GTP is bound by residues 225–230, 244–250, and 269–272; these read NVGKSS, SDIKGTT, and DTAG. Serine 229 provides a ligand contact to Mg(2+). Serine 244, isoleucine 246, and threonine 249 together coordinate K(+). Residue threonine 250 coordinates Mg(2+). Lysine 444 is a binding site for (6S)-5-formyl-5,6,7,8-tetrahydrofolate.

It belongs to the TRAFAC class TrmE-Era-EngA-EngB-Septin-like GTPase superfamily. TrmE GTPase family. As to quaternary structure, homodimer. Heterotetramer of two MnmE and two MnmG subunits. K(+) serves as cofactor.

The protein localises to the cytoplasm. Functionally, exhibits a very high intrinsic GTPase hydrolysis rate. Involved in the addition of a carboxymethylaminomethyl (cmnm) group at the wobble position (U34) of certain tRNAs, forming tRNA-cmnm(5)s(2)U34. The protein is tRNA modification GTPase MnmE of Malacoplasma penetrans (strain HF-2) (Mycoplasma penetrans).